Reading from the N-terminus, the 424-residue chain is Zona pellucida sperm-binding protein 3 (424 aa).

The first 22 residues, methionine 1 to proline 22, serve as a signal peptide directing secretion. Glutamine 23 is modified (pyrrolidone carboxylic acid). The Extracellular portion of the chain corresponds to glutamine 23–valine 387. Residues glutamate 45–asparagine 307 enclose the ZP domain. 2 disulfide bridges follow: cysteine 46–cysteine 140 and cysteine 78–cysteine 99. N-linked (GlcNAc...) asparagine glycosylation is found at asparagine 125 and asparagine 147. Residues threonine 156, threonine 162, and threonine 163 are each glycosylated (O-linked (GalNAc...) threonine). 2 cysteine pairs are disulfide-bonded: cysteine 217/cysteine 282 and cysteine 239/cysteine 300. An N-linked (GlcNAc...) asparagine glycan is attached at asparagine 272. Residues proline 330–glutamate 356 are disordered. A propeptide spans arginine 351–glutamate 424 (removed in mature form). The chain crosses the membrane as a helical span at residues valine 388–valine 408. Topologically, residues leucine 409 to glutamate 424 are cytoplasmic.

The protein belongs to the ZP domain family. ZPC subfamily. Polymers of ZP2 and ZP3 organized into long filaments cross-linked by ZP1 homodimers. Interacts with ZP1 and ZP2. In terms of processing, proteolytically cleaved before the transmembrane segment to yield the secreted ectodomain incorporated in the zona pellucida. Post-translationally, N-glycosylated. O-glycosylated; removal of O-linked glycans may play an important role in the post-fertilization block to polyspermy. In terms of tissue distribution, expressed in oocytes (at protein level).

Its subcellular location is the zona pellucida. The protein resides in the cell membrane. Component of the zona pellucida, an extracellular matrix surrounding oocytes which mediates sperm binding, induction of the acrosome reaction and prevents post-fertilization polyspermy. The zona pellucida is composed of 3 to 4 glycoproteins, ZP1, ZP2, ZP3, and ZP4. ZP3 is essential for sperm binding and zona matrix formation. This chain is Zona pellucida sperm-binding protein 3 (ZP3), found in Homo sapiens (Human).